The chain runs to 500 residues: Protein FAM83F (500 aa).

Position 2 is an N-acetylalanine (Ala2). The segment at 2-300 (AESQLNCLDE…LYAISEEVDL (299 aa)) is DUF1669. Residue Ser4 is modified to Phosphoserine. 3 disordered regions span residues 82 to 109 (NARGKSKAKAKAPAPAPAESGESLAYWP), 347 to 366 (QQREAGGNPEGQEEGASGGE), and 391 to 500 (IPLG…CVIS). Residues 397-419 (SQKDGRMVSHMHRDLKPKSREAP) show a composition bias toward basic and acidic residues. Composition is skewed to low complexity over residues 425–442 (GEAARGEAAPARRFSSRL) and 458–468 (SSVSTETSEVE). A compositionally biased stretch (polar residues) spans 477–500 (ENSSADISGKTSPSSAKPSNCVIS). Ser479 is subject to Phosphoserine.

This sequence belongs to the FAM83 family. As to quaternary structure, directly interacts (via DUF1669) with CSNK1A1 and CSNK1A1L.

It localises to the cell membrane. The polypeptide is Protein FAM83F (FAM83F) (Homo sapiens (Human)).